Reading from the N-terminus, the 153-residue chain is MASMRTSSMSLLLLLSLVALVKAGVIIPQSPGCPPTEDKNFPQHVRVNLNIVNRSTNSRRPTDYHKRSTSPWTLHRNEDPERYPSVIWEAKCSHSGCINAEGKVDHHMNSVTIQQEILVLRRESQHCPHSFRLEKMLVAVGCTCVTPIVRHLA.

The first 23 residues, 1–23 (MASMRTSSMSLLLLLSLVALVKA), serve as a signal peptide directing secretion. Residue asparagine 53 is glycosylated (N-linked (GlcNAc...) asparagine). The interval 56–76 (TNSRRPTDYHKRSTSPWTLHR) is disordered. 2 cysteine pairs are disulfide-bonded: cysteine 92–cysteine 142 and cysteine 97–cysteine 144.

The protein belongs to the IL-17 family. Homodimer. Forms complexes with IL17RA and IL17RC receptors with 2:1 binding stoichiometry: two receptor chains for one interleukin molecule. IL17A homodimer preferentially drives the formation of IL17RA-IL17RC heterodimeric receptor complex. IL17A homodimer adopts an asymmetrical ternary structure with one IL17RA molecule, allowing for high affinity interactions of one IL17A monomer with one IL17RA molecule (via D1 and D2 domains), while disfavoring binding of a second IL17RA molecule on the other IL17A monomer. Heterodimer with IL17F. IL17A-IL17F forms complexes with IL17RA-IL17RC, but with lower affinity when compared to IL17A homodimer. IL17RA and IL17RC chains cannot distinguish between IL17A and IL17F molecules, potentially enabling the formation of topologically distinct complexes.

It localises to the secreted. Its function is as follows. Effector cytokine of innate and adaptive immune system involved in antimicrobial host defense and maintenance of tissue integrity. Signals via IL17RA-IL17RC heterodimeric receptor complex, triggering homotypic interaction of IL17RA and IL17RC chains with TRAF3IP2 adapter. This leads to downstream TRAF6-mediated activation of NF-kappa-B and MAPkinase pathways ultimately resulting in transcriptional activation of cytokines, chemokines, antimicrobial peptides and matrix metalloproteinases, with potential strong immune inflammation. Plays an important role in connecting T cell-mediated adaptive immunity and acute inflammatory response to destroy extracellular bacteria and fungi. As a signature effector cytokine of T-helper 17 cells (Th17), primarily induces neutrophil activation and recruitment at infection and inflammatory sites. In airway epithelium, mediates neutrophil chemotaxis via induction of CXCL1 and CXCL5 chemokines. In secondary lymphoid organs, contributes to germinal center formation by regulating the chemotactic response of B cells to CXCL12 and CXCL13, enhancing retention of B cells within the germinal centers, B cell somatic hypermutation rate and selection toward plasma cells. Effector cytokine of a subset of gamma-delta T cells that functions as part of an inflammatory circuit downstream IL1B, TLR2 and IL23A-IL12B to promote neutrophil recruitment for efficient bacterial clearance. Effector cytokine of innate immune cells including invariant natural killer cell (iNKT) and group 3 innate lymphoid cells that mediate initial neutrophilic inflammation. Involved in the maintenance of the integrity of epithelial barriers during homeostasis and pathogen infection. Upon acute injury, has a direct role in epithelial barrier formation by regulating OCLN localization and tight junction biogenesis. As part of the mucosal immune response induced by commensal bacteria, enhances host's ability to resist pathogenic bacterial and fungal infections by promoting neutrophil recruitment and antimicrobial peptides release. In synergy with IL17F, mediates the production of antimicrobial beta-defensins DEFB1, DEFB103A, and DEFB104A by mucosal epithelial cells, limiting the entry of microbes through the epithelial barriers. Involved in antiviral host defense through various mechanisms. Enhances immunity against West Nile virus by promoting T cell cytotoxicity. May play a beneficial role in influenza A virus (H5N1) infection by enhancing B cell recruitment and immune response in the lung. Contributes to influenza A virus (H1N1) clearance by driving the differentiation of B-1a B cells, providing for production of virus-specific IgM antibodies at first line of host defense. This chain is Interleukin-17A (IL17A), found in Bos taurus (Bovine).